Reading from the N-terminus, the 113-residue chain is Protein CTLA-2-beta (113 aa).

2 consecutive repeat copies span residues 15 to 17 and 18 to 20. The interval 15 to 20 is 2 X 3 AA tandem repeats of E-W-K; that stretch reads EWKEWK.

To the propeptide regions of cysteine proteases.

In terms of biological role, not known, expressed in activated T-cell. This is Protein CTLA-2-beta (Ctla2b) from Mus musculus (Mouse).